We begin with the raw amino-acid sequence, 311 residues long: Ribosomal RNA small subunit methyltransferase H (311 aa).

S-adenosyl-L-methionine contacts are provided by residues 32-34, D52, F79, D100, and Q107; that span reads AGH.

This sequence belongs to the methyltransferase superfamily. RsmH family.

It is found in the cytoplasm. It catalyses the reaction cytidine(1402) in 16S rRNA + S-adenosyl-L-methionine = N(4)-methylcytidine(1402) in 16S rRNA + S-adenosyl-L-homocysteine + H(+). Functionally, specifically methylates the N4 position of cytidine in position 1402 (C1402) of 16S rRNA. This chain is Ribosomal RNA small subunit methyltransferase H, found in Staphylococcus aureus (strain bovine RF122 / ET3-1).